The chain runs to 98 residues: Cystatin-B (98 aa).

M1 is modified (N-acetylmethionine). The short motif at 46 to 50 is the Secondary area of contact element; it reads QVVAG.

Belongs to the cystatin family. As to quaternary structure, able to form dimers stabilized by noncovalent forces.

Its subcellular location is the cytoplasm. It is found in the nucleus. This is an intracellular thiol proteinase inhibitor. Tightly binding reversible inhibitor of cathepsins L, H and B. The protein is Cystatin-B (CSTB) of Pan troglodytes (Chimpanzee).